A 31-amino-acid polypeptide reads, in one-letter code: Cyclotide cter-E (31 aa).

Residues 1-31 (GIPCAESCVWIPCTVTALLGCSCKDKVCYLD) constitute a cross-link (cyclopeptide (Gly-Asp)). 3 disulfide bridges follow: Cys4–Cys21, Cys8–Cys23, and Cys13–Cys28.

Post-translationally, contains 3 disulfide bonds. In terms of processing, this is a cyclic peptide.

In terms of biological role, probably participates in a plant defense mechanism. This Clitoria ternatea (Butterfly pea) protein is Cyclotide cter-E.